The primary structure comprises 233 residues: Transmembrane protein 40 (233 aa).

At M1 the chain carries N-acetylmethionine. Polar residues predominate over residues 1–14 (METSASSSQPQDNS). A disordered region spans residues 1–143 (METSASSSQP…RRGSDPASGE (143 aa)). Low complexity predominate over residues 50 to 70 (SSSSSSSSSSSSSSSSSSSSS). A compositionally biased stretch (gly residues) spans 93–104 (YPHGNGSPGPGH). Residues 105–114 (GEPDVLKDEL) show a composition bias toward basic and acidic residues. Position 137 is a phosphoserine (S137). Helical transmembrane passes span 160–180 (FFHF…YHYY) and 187–207 (LGVG…FGLV).

It is found in the membrane. This is Transmembrane protein 40 (TMEM40) from Homo sapiens (Human).